We begin with the raw amino-acid sequence, 325 residues long: tRNA(Ile)-lysidine synthase (325 aa).

Residue 34–39 participates in ATP binding; the sequence is SGGADS.

The protein belongs to the tRNA(Ile)-lysidine synthase family.

Its subcellular location is the cytoplasm. It carries out the reaction cytidine(34) in tRNA(Ile2) + L-lysine + ATP = lysidine(34) in tRNA(Ile2) + AMP + diphosphate + H(+). Ligates lysine onto the cytidine present at position 34 of the AUA codon-specific tRNA(Ile) that contains the anticodon CAU, in an ATP-dependent manner. Cytidine is converted to lysidine, thus changing the amino acid specificity of the tRNA from methionine to isoleucine. The polypeptide is tRNA(Ile)-lysidine synthase (Rhodococcus jostii (strain RHA1)).